The sequence spans 400 residues: Glycine betaine/proline betaine transport system ATP-binding protein ProV (400 aa).

The ABC transporter domain occupies 29–265 (LSKEQILEKT…PANDYVRTFF (237 aa)). 61–68 (GLSGSGKS) is an ATP binding site. CBS domains are found at residues 280-341 (ARRS…GIEA) and 343-400 (LIDD…GNNG).

The protein belongs to the ABC transporter superfamily. In terms of assembly, the complex is composed of two ATP-binding proteins (ProV), two transmembrane proteins (ProW) and a solute-binding protein (ProX).

The protein localises to the cell inner membrane. Functionally, part of the ProU ABC transporter complex involved in glycine betaine and proline betaine uptake. Probably responsible for energy coupling to the transport system. This is Glycine betaine/proline betaine transport system ATP-binding protein ProV from Salmonella typhimurium (strain LT2 / SGSC1412 / ATCC 700720).